Reading from the N-terminus, the 446-residue chain is Glutamine synthetase (446 aa).

Residues 15–102 (RDIRFVRLWF…MFCDITMPDG (88 aa)) form the GS beta-grasp domain. In terms of domain architecture, GS catalytic spans 109–446 (SRHVLRRQLA…PYELKNYLSL (338 aa)). Mg(2+)-binding residues include glutamate 132 and glutamate 134. Glutamate 184 contacts ATP. The Mg(2+) site is built by glutamate 189 and glutamate 196. Glycine 241 is a binding site for L-glutamate. Histidine 245 contributes to the Mg(2+) binding site. ATP is bound by residues 247 to 249 (HMS) and serine 249. Residues arginine 298, glutamate 304, and arginine 316 each contribute to the L-glutamate site. Positions 316 and 321 each coordinate ATP. Residue glutamate 336 participates in Mg(2+) binding. Arginine 338 contacts L-glutamate. Lysine 363 participates in a covalent cross-link: Isoglutamyl lysine isopeptide (Lys-Gln) (interchain with Q-Cter in protein Pup).

Belongs to the glutamine synthetase family. Oligomer of 12 subunits arranged in the form of two hexagons. In its feedback-inhibited form, interacts with TnrA in order to block its DNA-binding activity. Mg(2+) is required as a cofactor.

Its subcellular location is the cytoplasm. It carries out the reaction L-glutamate + NH4(+) + ATP = L-glutamine + ADP + phosphate + H(+). Its activity is regulated as follows. Inhibited by glutamine. Its function is as follows. Glutamine synthetase (GS) is an unusual multitasking protein that functions as an enzyme, a transcription coregulator, and a chaperone in ammonium assimilation and in the regulation of genes involved in nitrogen metabolism. It catalyzes the ATP-dependent biosynthesis of glutamine from glutamate and ammonia. Feedback-inhibited GlnA also interacts with and regulates the activity of the transcriptional regulator TnrA. During nitrogen limitation, TnrA is in its DNA-binding active state and turns on the transcription of genes required for nitrogen assimilation. Under conditions of nitrogen excess, feedback-inhibited GlnA forms a stable complex with TnrA, which inhibits its DNA-binding activity. In contrast, feedback-inhibited GlnA acts as a chaperone to stabilize the DNA-binding activity of GlnR, which represses the transcription of nitrogen assimilation genes. The protein is Glutamine synthetase of Mycolicibacterium smegmatis (strain ATCC 700084 / mc(2)155) (Mycobacterium smegmatis).